The chain runs to 197 residues: Ribonuclease HII (197 aa).

Positions I4–S197 constitute an RNase H type-2 domain. D10, E11, and D106 together coordinate a divalent metal cation.

Belongs to the RNase HII family. It depends on Mn(2+) as a cofactor. Requires Mg(2+) as cofactor.

The protein resides in the cytoplasm. The catalysed reaction is Endonucleolytic cleavage to 5'-phosphomonoester.. Its function is as follows. Endonuclease that specifically degrades the RNA of RNA-DNA hybrids. This Polynucleobacter necessarius subsp. necessarius (strain STIR1) protein is Ribonuclease HII.